The following is a 654-amino-acid chain: Pentatricopeptide repeat-containing protein At5g61400 (654 aa).

16 PPR repeats span residues 37–71 (SSFSSSSLAEAILKCRSAEEAFKLFETSSRSRVSK), 74–104 (DLQSFSAVIHVLTGAHKYTLARCLIKSLIER), 131–161 (SIGVFSLLIMEFLEMGLFEEALWVSREMKCS), 163–197 (DSKACLSILNGLVRRRRFDSVWVDYQLMISRGLVP), 198–232 (DVHIYFVLFQCCFKQGLYSKKEKLLDEMTSLGIKP), 233–267 (NVYIYTIYILDLCRDNKMEEAEKMFELMKKHGVLP), 268–302 (NLYTYSAMIDGYCKTGNVRQAYGLYKEILVAELLP), 303–337 (NVVVFGTLVDGFCKARELVTARSLFVHMVKFGVDP), 338–372 (NLYVYNCLIHGHCKSGNMLEAVGLLSEMESLNLSP), 373–407 (DVFTYTILINGLCIEDQVAEANRLFQKMKNERIFP), 408–442 (SSATYNSLIHGYCKEYNMEQALDLCSEMTASGVEP), 443–477 (NIITFSTLIDGYCNVRDIKAAMGLYFEMTIKGIVP), 478–512 (DVVTYTALIDAHFKEANMKEALRLYSDMLEAGIHP), 513–543 (NDHTFACLVDGFWKEGRLSVAIDFYQENNQQ), 548–582 (NHVGFTCLIEGLCQNGYILRASRFFSDMRSCGITP), and 583–617 (DICSYVSMLKGHLQEKRITDTMMLQCDMIKTGILP).

The protein belongs to the PPR family. P subfamily.

The protein is Pentatricopeptide repeat-containing protein At5g61400 of Arabidopsis thaliana (Mouse-ear cress).